A 666-amino-acid chain; its full sequence is ATP synthase subunit alpha 2 (666 aa).

182-189 (GDRATGKT) provides a ligand contact to ATP. The disordered stretch occupies residues 527-666 (MPAEDAAGDI…DAEAEARHKR (140 aa)). Basic and acidic residues predominate over residues 545–590 (ARGDADRDADHGANREVSREVSPEASREVSREVSCEVSHEADRDAA). A compositionally biased stretch (low complexity) spans 591 to 601 (ADAARVAGRAP). Positions 623 to 641 (ADGDRASASRPRPDARGDA) are enriched in basic and acidic residues.

The protein belongs to the ATPase alpha/beta chains family. F-type ATPases have 2 components, CF(1) - the catalytic core - and CF(0) - the membrane proton channel. CF(1) has five subunits: alpha(3), beta(3), gamma(1), delta(1), epsilon(1). CF(0) has three main subunits: a(1), b(2) and c(9-12). The alpha and beta chains form an alternating ring which encloses part of the gamma chain. CF(1) is attached to CF(0) by a central stalk formed by the gamma and epsilon chains, while a peripheral stalk is formed by the delta and b chains.

It localises to the cell inner membrane. The catalysed reaction is ATP + H2O + 4 H(+)(in) = ADP + phosphate + 5 H(+)(out). Functionally, produces ATP from ADP in the presence of a proton gradient across the membrane. The alpha chain is a regulatory subunit. The polypeptide is ATP synthase subunit alpha 2 (Burkholderia pseudomallei (strain 1106a)).